The following is a 493-amino-acid chain: Desmethylyatein synthase (493 aa).

Residues 1–21 traverse the membrane as a helical segment; that stretch reads METFQCLTLFLLFISTVFILK. C434 contributes to the heme binding site.

This sequence belongs to the cytochrome P450 family. It depends on heme as a cofactor.

It is found in the membrane. It carries out the reaction (-)-bursehernin + reduced [NADPH--hemoprotein reductase] + O2 = (-)-5'-demethylyatein + oxidized [NADPH--hemoprotein reductase] + H2O + H(+). It participates in aromatic compound metabolism; phenylpropanoid biosynthesis. Functionally, cytochrome P450 involved in the biosynthesis of etoposide, a chemotherapeutic compound of the topoisomerase inhibitor family. Catalyzes the conversion of bursehernin to demethylyatein. The sequence is that of Desmethylyatein synthase from Sinopodophyllum hexandrum (Himalayan may apple).